A 433-amino-acid polypeptide reads, in one-letter code: Xylose isomerase (433 aa).

Residues His99 and Asp102 contribute to the active site. Mg(2+) is bound by residues Glu230, Glu266, His269, Asp294, Asp305, Asp307, and Asp337.

The protein belongs to the xylose isomerase family. In terms of assembly, homotetramer. Requires Mg(2+) as cofactor.

Its subcellular location is the cytoplasm. It carries out the reaction alpha-D-xylose = alpha-D-xylulofuranose. The chain is Xylose isomerase from Roseobacter denitrificans (strain ATCC 33942 / OCh 114) (Erythrobacter sp. (strain OCh 114)).